The following is a 529-amino-acid chain: BTB/POZ domain-containing protein 6 (529 aa).

A BTB domain is found at 127–197; that stretch reads ADVHFIVGPA…LYSDEIDLEA (71 aa).

In terms of assembly, homodimer and heterodimer. Interacts with cul3 via the BTB domain.

It localises to the cytoplasm. Adapter protein for the cul3 E3 ubiquitin-protein ligase complex. Involved in late neuronal development and muscle formation. In Xenopus laevis (African clawed frog), this protein is BTB/POZ domain-containing protein 6 (btbd6).